The sequence spans 285 residues: Golgi to ER traffic protein 2 (285 aa).

A compositionally biased stretch (basic and acidic residues) spans 1–10 (MSELTEAEKR). A disordered region spans residues 1–71 (MSELTEAEKR…HSATPDIKED (71 aa)). Ser-2 is subject to N-acetylserine. The Cytoplasmic portion of the chain corresponds to 2-148 (SELTEAEKRR…LDYHDYLLNR (147 aa)). Residues 11–20 (RLLRERRQKK) show a composition bias toward basic residues. Over residues 24 to 42 (GGASSRLNKITGQASSHLN) the composition is skewed to polar residues. At Ser-45 the chain carries Phosphoserine. The span at 49–60 (APSAAKATPPAS) shows a compositional bias: low complexity. The chain crosses the membrane as a helical span at residues 149–169 (LKAWTILVKWVFFLLPYLYLI). Topologically, residues 170-196 (TRPNSSVWPAYAFTQSAWFAPLRNPSN) are lumenal. Residues Asn-173 and Asn-196 are each glycosylated (N-linked (GlcNAc...) asparagine). A helical membrane pass occupies residues 197-216 (FTRIFATFEFLSISIYYQLL). Topologically, residues 217 to 263 (KNVEHKSKIKNLQDTNKLVKLVSLVPEGVIPVANLKGKLITLLQYWD) are cytoplasmic. Residues 264–284 (LLSMLITDISFVLIVLGLLTY) form a helical membrane-spanning segment. Residue Leu-285 is a topological domain, lumenal.

This sequence belongs to the GET2 family. Component of the Golgi to ER traffic (GET) complex, which is composed of GET1, GET2 and GET3. Within the complex, GET1 and GET2 form a heterotetramer which is stabilized by phosphatidylinositol binding and which binds to the GET3 homodimer.

The protein resides in the endoplasmic reticulum membrane. It is found in the golgi apparatus membrane. Its function is as follows. Required for the post-translational delivery of tail-anchored (TA) proteins to the endoplasmic reticulum. Together with GET1, acts as a membrane receptor for soluble GET3, which recognizes and selectively binds the transmembrane domain of TA proteins in the cytosol. The GET complex cooperates with the HDEL receptor ERD2 to mediate the ATP-dependent retrieval of resident ER proteins that contain a C-terminal H-D-E-L retention signal from the Golgi to the ER. Involved in DNA replication and DNA damage response and also in cell wall function. The chain is Golgi to ER traffic protein 2 from Saccharomyces cerevisiae (strain YJM789) (Baker's yeast).